The following is a 1358-amino-acid chain: MSYSYAEKKRIRKEFGVLPHILDVPYLLSIQTESYKKFLTADAAKGRLHSGLEIVLKQSFPVESKNGQYELHYVDYQIGEPTFDETECQVRGATYDAPLNVKLRLVVYNKDALPNEKIVEDIREEYVYMGDIPLMTTNGTFIINGTERVVVSQLHRSPGVFFSKDDSEEGAFSARIIPYRGSWLDFEFDSKGIIWARIDRKRKFCATVILKALGYTQEQILENFSETKTITFNSKGFALRLDNLSNMKGELLKFDIVDAQDNVIVKKNKKLTSRDVKKIKDAGVDSVAIDFDLVSTLRVAKDIVNEATGEVIAYANDDVTESLLESCVEVGMLELEVIDFITTERGRYISDTLKYDLTRNTDEALVEIYKVLRPGDPPAAASVKALFEGLFFIESRYSLSDIGRMKLNARLGSDKVSKDIYTLENSDIVGVIEELINIRDGKGKVDDIDHLGNRRVRSVGEMVENQFRIGLYRVEKGIRESMSLVHKDKLMPKDIVNSKPITAAIKEFFTSGALSQFMDQDNPLSEVTHKRRISALGPGGLSRDRAGFEVRDVHATHYGRLCPIETPEGPNIGLINSLASYARVNDYGFLEAPYRKVVDGKVTDEIEYLSAIDEDNYVIAQASTKLDENNHFVEDLIQCRSGGEAIFTESSRVQYMDVSAKQMVSAAAALIPFLEHDDANRVLMGANMQRQAVPTLKSEKPLVGTGMEKIVARDSGNCIIARNAGEVAEVDSNRIVIKVDTEKSQTSNLVDIYSLTKFKRSNKNTCINQRPIVNVGDKVEAGDILADGFATDFGELSLGHNLMVAFMPWNGYNFEDSILLSERIVKDDKYTSIHIEEFTCVARDTKLGPEEITADIPNVSESSLAKLDESGIVHIGANVEAGDILVAKITPKAEQQLTPEERLLRAIFNEKASNVADSSLRMPSGTSGTVINVQVFENDKGGKSKRALKIEKELIDKARKDFDEEFAVIESVVKSSIEQEVVGAKIQKAKGLKKGAILTKEFLATLPFSKWLEISFEDEKLEEKVQNAREYYEEAKIAIDAKFEAKKKSITQSNELSPGVLKTVKVFVAIKKRIQPGDKMAGRHGNKGVVSRVLPVEDMPYMEDGTPVDVCLNPLGIPSRMNIGQILEAHLGLASYGLGKKIEKTLEKTRKAAELRKTLEEVYNSVGDKKVNLEALNDEEILTLCDNLKGGVPIATPVFDGAKEEDIKSLLKIGGFATNGQMKLFDGRTGKPFDRHVTVGYMYMLKLDHLVDDKMHARSTGSYSLVTQQPLGGKAQFGGQRFGEMEVWALQAYGAAYTLREMLTVKSDDIAGRSKMYKNIVDGKLTMNVDVPESFNVLRNEVRALGIDMDFDYSSEEE.

Belongs to the RNA polymerase beta chain family. The RNAP catalytic core consists of 2 alpha, 1 beta, 1 beta' and 1 omega subunit. When a sigma factor is associated with the core the holoenzyme is formed, which can initiate transcription.

It carries out the reaction RNA(n) + a ribonucleoside 5'-triphosphate = RNA(n+1) + diphosphate. Functionally, DNA-dependent RNA polymerase catalyzes the transcription of DNA into RNA using the four ribonucleoside triphosphates as substrates. In Francisella tularensis subsp. novicida (strain U112), this protein is DNA-directed RNA polymerase subunit beta.